The sequence spans 189 residues: Segregation and condensation protein B (189 aa).

It belongs to the ScpB family. In terms of assembly, homodimer. Homodimerization may be required to stabilize the binding of ScpA to the Smc head domains. Component of a cohesin-like complex composed of ScpA, ScpB and the Smc homodimer, in which ScpA and ScpB bind to the head domain of Smc. The presence of the three proteins is required for the association of the complex with DNA.

Its subcellular location is the cytoplasm. Functionally, participates in chromosomal partition during cell division. May act via the formation of a condensin-like complex containing Smc and ScpA that pull DNA away from mid-cell into both cell halves. The chain is Segregation and condensation protein B from Streptococcus sanguinis (strain SK36).